The sequence spans 255 residues: AA9 family lytic polysaccharide monooxygenase D (255 aa).

The N-terminal stretch at 1–19 (MYRTLGSIALLAGGAAAHG) is a signal peptide. Cu(2+) contacts are provided by His18 and His92. 2 disulfide bridges follow: Cys65–Cys189 and Cys104–Cys111. Asn152 carries N-linked (GlcNAc...) asparagine glycosylation. 2 residues coordinate O2: His178 and Gln184. Tyr186 provides a ligand contact to Cu(2+). N-linked (GlcNAc...) asparagine glycosylation is present at Asn220.

It belongs to the polysaccharide monooxygenase AA9 family. Cu(2+) serves as cofactor.

The protein resides in the secreted. The enzyme catalyses [(1-&gt;4)-beta-D-glucosyl]n+m + reduced acceptor + O2 = 4-dehydro-beta-D-glucosyl-[(1-&gt;4)-beta-D-glucosyl]n-1 + [(1-&gt;4)-beta-D-glucosyl]m + acceptor + H2O.. In terms of biological role, lytic polysaccharide monooxygenase (LPMO) that depolymerizes crystalline and amorphous polysaccharides via the oxidation of scissile alpha- or beta-(1-4)-glycosidic bonds, yielding specifically C1 oxidation product. Catalysis by LPMOs requires the reduction of the active-site copper from Cu(II) to Cu(I) by a reducing agent and H(2)O(2) or O(2) as a cosubstrate. Is active on regenerated amorphous cellulose (RAC) in the presence of ascorbic acid or 3-methylcatechol. Also acts on phosphoric acid swollen cellulose (PASC) as a substrate. The chain is AA9 family lytic polysaccharide monooxygenase D from Thermothelomyces thermophilus (strain ATCC 42464 / BCRC 31852 / DSM 1799) (Sporotrichum thermophile).